A 227-amino-acid chain; its full sequence is uncharacterized protein (227 aa).

Transmembrane regions (helical) follow at residues 7–24 (FVYA…VTWA) and 135–157 (VVVI…LMCL).

The protein belongs to the TMEM9 family.

The protein localises to the membrane. This is an uncharacterized protein from Drosophila melanogaster (Fruit fly).